The primary structure comprises 256 residues: 5-keto-4-deoxy-D-glucarate aldolase (256 aa).

His50 acts as the Proton acceptor in catalysis. Residue Gln151 participates in substrate binding. Glu153 contacts Mg(2+). Ser178 and Asp179 together coordinate substrate. Asp179 provides a ligand contact to Mg(2+).

It belongs to the HpcH/HpaI aldolase family. KDGluc aldolase subfamily. Homohexamer; trimer of dimers. Requires Mg(2+) as cofactor.

It carries out the reaction 5-dehydro-4-deoxy-D-glucarate = 2-hydroxy-3-oxopropanoate + pyruvate. The catalysed reaction is 2-dehydro-3-deoxy-D-glucarate = 2-hydroxy-3-oxopropanoate + pyruvate. It functions in the pathway carbohydrate acid metabolism; galactarate degradation; D-glycerate from galactarate: step 2/3. In terms of biological role, catalyzes the reversible retro-aldol cleavage of both 5-keto-4-deoxy-D-glucarate and 2-keto-3-deoxy-D-glucarate to pyruvate and tartronic semialdehyde. The sequence is that of 5-keto-4-deoxy-D-glucarate aldolase from Salmonella paratyphi A (strain ATCC 9150 / SARB42).